A 40-amino-acid chain; its full sequence is IFGGTFAKNGEYPWMVVIDLPEFACGGVLISKKFVLTAAH.

The region spanning 1–40 is the Peptidase S1 domain; it reads IFGGTFAKNGEYPWMVVIDLPEFACGGVLISKKFVLTAAH. The active-site Charge relay system is the His-40.

Belongs to the peptidase S1 family. Expressed by the venom gland.

Its subcellular location is the secreted. Binds in a dose-dependent manner to the breast cancer cell line MCF-7. The polypeptide is Serine proteinase-like BMK-CBP (Olivierus martensii (Manchurian scorpion)).